The following is a 132-amino-acid chain: Sec-independent protein translocase protein TatB (132 aa).

A helical membrane pass occupies residues 2-22 (FDGIGFMELLLIGILGLVVLG). A disordered region spans residues 68-132 (ENQGLKDLSP…VSANPDKSNR (65 aa)). Residues 102–122 (TPSASSSAPSESTPSEAPTAE) are compositionally biased toward low complexity.

Belongs to the TatB family. As to quaternary structure, the Tat system comprises two distinct complexes: a TatABC complex, containing multiple copies of TatA, TatB and TatC subunits, and a separate TatA complex, containing only TatA subunits. Substrates initially bind to the TatABC complex, which probably triggers association of the separate TatA complex to form the active translocon.

It is found in the cell inner membrane. Part of the twin-arginine translocation (Tat) system that transports large folded proteins containing a characteristic twin-arginine motif in their signal peptide across membranes. Together with TatC, TatB is part of a receptor directly interacting with Tat signal peptides. TatB may form an oligomeric binding site that transiently accommodates folded Tat precursor proteins before their translocation. The protein is Sec-independent protein translocase protein TatB of Shewanella woodyi (strain ATCC 51908 / MS32).